A 289-amino-acid polypeptide reads, in one-letter code: Probable endonuclease 4 (289 aa).

9 residues coordinate Zn(2+): histidine 76, histidine 116, glutamate 152, aspartate 186, histidine 189, histidine 220, aspartate 233, histidine 235, and glutamate 265.

It belongs to the AP endonuclease 2 family. The cofactor is Zn(2+).

The catalysed reaction is Endonucleolytic cleavage to 5'-phosphooligonucleotide end-products.. Its function is as follows. Endonuclease IV plays a role in DNA repair. It cleaves phosphodiester bonds at apurinic or apyrimidinic (AP) sites, generating a 3'-hydroxyl group and a 5'-terminal sugar phosphate. This chain is Probable endonuclease 4, found in Malacoplasma penetrans (strain HF-2) (Mycoplasma penetrans).